Here is a 309-residue protein sequence, read N- to C-terminus: MPAEGGKTDMERIGLFSEMEYITVGDKYVSQFNRPFNEAASKNKQMLPGGSKEMSDLQAGYFDPHFVRIFEGEGYINLNQVRRRDMVEAAKKNLGKAFLPSNGEKKPCGLGSYYGTIGGPVPFFSAQSKPREKYKAPGKNLYTNPGKKGTGYGYANITIGKQFSHSADFYDAAKLKYKKANEEHHRLLKGAPFKLNLHPRDYFDANPYFSEESLPPIKKEEKKKTISNTFKPSSPGKKPGGMKAGTFDPYPSHSADPYVAKLANISGKDDKIFHPPSGPKSRPVESIMTLNVRRALNSKNYKTSSVPSY.

A disordered region spans residues 220–249 (EEKKKTISNTFKPSSPGKKPGGMKAGTFDP).

The protein belongs to the CFAP96 family. As to expression, detected in testis and fetal liver.

The protein resides in the cytoplasm. The protein localises to the cytoskeleton. It is found in the microtubule organizing center. Its subcellular location is the centrosome. This is Cilia-and flagella-associated protein 96 from Homo sapiens (Human).